The sequence spans 123 residues: Ribosome-binding factor A (123 aa).

This sequence belongs to the RbfA family. In terms of assembly, monomer. Binds 30S ribosomal subunits, but not 50S ribosomal subunits or 70S ribosomes.

It is found in the cytoplasm. Functionally, one of several proteins that assist in the late maturation steps of the functional core of the 30S ribosomal subunit. Associates with free 30S ribosomal subunits (but not with 30S subunits that are part of 70S ribosomes or polysomes). Required for efficient processing of 16S rRNA. May interact with the 5'-terminal helix region of 16S rRNA. The protein is Ribosome-binding factor A of Neisseria meningitidis serogroup B (strain ATCC BAA-335 / MC58).